The primary structure comprises 209 residues: V-type ATP synthase subunit D (209 aa).

It belongs to the V-ATPase D subunit family.

Functionally, produces ATP from ADP in the presence of a proton gradient across the membrane. The chain is V-type ATP synthase subunit D from Anaeromyxobacter sp. (strain K).